The sequence spans 393 residues: Protein TsgA (393 aa).

The next 12 helical transmembrane spans lie at 11-31, 51-71, 78-98, 101-121, 134-154, 162-182, 206-226, 245-265, 273-293, 298-318, 332-352, and 361-381; these read WISF…GMVM, FLNA…EIVP, FGFI…SLAL, AAMF…TFLI, LLFT…VAAF, WYWV…LTFG, IGVL…LGFI, ALVS…SFIL, ILTV…TGTQ, WFIL…ITLG, FILT…GPIV, and LLTA…LGFV.

The protein belongs to the major facilitator superfamily. TsgA family.

Its subcellular location is the cell inner membrane. The protein is Protein TsgA of Salmonella dublin (strain CT_02021853).